A 142-amino-acid chain; its full sequence is Large ribosomal subunit protein uL13 (142 aa).

The protein belongs to the universal ribosomal protein uL13 family. As to quaternary structure, part of the 50S ribosomal subunit.

Functionally, this protein is one of the early assembly proteins of the 50S ribosomal subunit, although it is not seen to bind rRNA by itself. It is important during the early stages of 50S assembly. This Shewanella frigidimarina (strain NCIMB 400) protein is Large ribosomal subunit protein uL13.